The sequence spans 267 residues: MYFEILGKDTPLAPTLVLSAGLGGAGSFWQPQINALGEHFRVVVYDHFGTARSKGSVPDGYSMADMADEVAQLLRSLNVDCCYFVGHALGGMIGLQLALTHPQLVEKLVVVNGWPTLDSQTRRCFKVRQDLLLNSGVEAYVRAQPLFLFPADWLSQHSALLDEELQHQTAHFQGTENLLRRLTALMNTDFRPHLADITTPTLALCSRDDLLVPYHCSHQLAASLPNGELAEMAYGGHAMSVTDTEHFNRILLGWLLKTQNAQTRLQP.

An AB hydrolase-1 domain is found at 14 to 115 (PTLVLSAGLG…EKLVVVNGWP (102 aa)).

Belongs to the AB hydrolase superfamily. Hydrolase RutD family.

The enzyme catalyses carbamate + 2 H(+) = NH4(+) + CO2. Involved in pyrimidine catabolism. May facilitate the hydrolysis of carbamate, a reaction that can also occur spontaneously. The polypeptide is Putative carbamate hydrolase RutD (Serratia proteamaculans (strain 568)).